The chain runs to 122 residues: MIQQESRLRVADNTGAREILCIRVLGGSGRRYAGIGDIIVGTVKDALPGAGVKRGDVVKAVVVRTTKERRRPDGSYIRFDENAAVLIRDGGDPRGTRIFGPVGRELRDKKFMKIISLAPEVL.

It belongs to the universal ribosomal protein uL14 family. As to quaternary structure, part of the 50S ribosomal subunit. Forms a cluster with proteins L3 and L19. In the 70S ribosome, L14 and L19 interact and together make contacts with the 16S rRNA in bridges B5 and B8.

Its function is as follows. Binds to 23S rRNA. Forms part of two intersubunit bridges in the 70S ribosome. The polypeptide is Large ribosomal subunit protein uL14 (Frankia alni (strain DSM 45986 / CECT 9034 / ACN14a)).